Here is a 967-residue protein sequence, read N- to C-terminus: Disks large homolog 1 (967 aa).

The L27 domain occupies 5–65 (SSEKAHKAIE…LYEQTLLSER (61 aa)). One can recognise a PDZ 1 domain in the interval 202 to 289 (NIVLEKGHTG…VVSLSLKRRK (88 aa)). The disordered stretch occupies residues 324–351 (IHSPSAPIHPPPPPPVHHGSLSQLSVGQ). Positions 330–339 (PIHPPPPPPV) are enriched in pro residues. 2 PDZ domains span residues 361-448 (VIDL…QQGT) and 510-591 (PVQL…QYRP). In terms of domain architecture, SH3 spans 619–690 (RKSEYVRALF…PSKKRVEKRE (72 aa)). A disordered region spans residues 673 to 723 (EETAEGVIPSKKRVEKRERLRRKQVNFNSGSQSLGRNSSTTGLENRRGSRS). Basic residues predominate over residues 682-696 (SKKRVEKRERLRRKQ). A compositionally biased stretch (polar residues) spans 697 to 715 (VNFNSGSQSLGRNSSTTGL). A Guanylate kinase-like domain is found at 769-955 (VRPVIILGAL…VLSKVYSIIS (187 aa)).

The protein belongs to the MAGUK family. In terms of assembly, homooligomerizes; requires L27 domain. Interacts (via L27 domain) with ajm-1; the interaction regulates ajm-1 apical junction location. Expressed in the apical junctions in the hypodermis. Expressed in epithelial cells in the reproductive system including vulva, uterus and spermatheca.

The protein resides in the membrane. Its subcellular location is the apical cell membrane. It localises to the cell junction. It is found in the adherens junction. The protein localises to the lateral cell membrane. The protein resides in the cytoplasm. Essential multidomain scaffolding protein required for normal development. Recruits channels, receptors and signaling molecules to discrete plasma membrane domains in polarized cells. Required for proper embryonic elongation. Acts upstream of ajm-1 and becomes localized to apical junctions independently of ajm-1. With let-413, cooperatively regulates ajm-1 localization to apical junctions and the establishment of newly formed epithelia. Plays a role in assembling the adherens junction by clustering ajm-1 and other proteins, to form electron-dense structures; may form a compartment distinct to that of hmp-1 and associated proteins. Plays a role in the directed outgrowth of seam cells, towards neighboring seam cells, during larval development. This Caenorhabditis elegans protein is Disks large homolog 1.